Here is a 103-residue protein sequence, read N- to C-terminus: Small ribosomal subunit protein uS10 (103 aa).

The protein belongs to the universal ribosomal protein uS10 family. In terms of assembly, part of the 30S ribosomal subunit.

Its function is as follows. Involved in the binding of tRNA to the ribosomes. This is Small ribosomal subunit protein uS10 from Pelodictyon phaeoclathratiforme (strain DSM 5477 / BU-1).